Reading from the N-terminus, the 244-residue chain is 1-(5-phosphoribosyl)-5-[(5-phosphoribosylamino)methylideneamino] imidazole-4-carboxamide isomerase (244 aa).

Asp-12 functions as the Proton acceptor in the catalytic mechanism. Residue Asp-131 is the Proton donor of the active site.

This sequence belongs to the HisA/HisF family.

Its subcellular location is the cytoplasm. It catalyses the reaction 1-(5-phospho-beta-D-ribosyl)-5-[(5-phospho-beta-D-ribosylamino)methylideneamino]imidazole-4-carboxamide = 5-[(5-phospho-1-deoxy-D-ribulos-1-ylimino)methylamino]-1-(5-phospho-beta-D-ribosyl)imidazole-4-carboxamide. It participates in amino-acid biosynthesis; L-histidine biosynthesis; L-histidine from 5-phospho-alpha-D-ribose 1-diphosphate: step 4/9. This Nocardioides sp. (strain ATCC BAA-499 / JS614) protein is 1-(5-phosphoribosyl)-5-[(5-phosphoribosylamino)methylideneamino] imidazole-4-carboxamide isomerase.